Reading from the N-terminus, the 132-residue chain is Phosphoribosyl-AMP cyclohydrolase (132 aa).

Asp-86 lines the Mg(2+) pocket. Cys-87 is a Zn(2+) binding site. Residues Asp-88 and Asp-90 each contribute to the Mg(2+) site. Positions 103 and 110 each coordinate Zn(2+).

This sequence belongs to the PRA-CH family. Homodimer. Mg(2+) serves as cofactor. The cofactor is Zn(2+).

It is found in the cytoplasm. It catalyses the reaction 1-(5-phospho-beta-D-ribosyl)-5'-AMP + H2O = 1-(5-phospho-beta-D-ribosyl)-5-[(5-phospho-beta-D-ribosylamino)methylideneamino]imidazole-4-carboxamide. It functions in the pathway amino-acid biosynthesis; L-histidine biosynthesis; L-histidine from 5-phospho-alpha-D-ribose 1-diphosphate: step 3/9. Functionally, catalyzes the hydrolysis of the adenine ring of phosphoribosyl-AMP. The chain is Phosphoribosyl-AMP cyclohydrolase from Haloquadratum walsbyi (strain DSM 16790 / HBSQ001).